The chain runs to 219 residues: Large ribosomal subunit protein uL3 (219 aa).

It belongs to the universal ribosomal protein uL3 family. In terms of assembly, part of the 50S ribosomal subunit. Forms a cluster with proteins L14 and L19.

Functionally, one of the primary rRNA binding proteins, it binds directly near the 3'-end of the 23S rRNA, where it nucleates assembly of the 50S subunit. The protein is Large ribosomal subunit protein uL3 of Salinispora tropica (strain ATCC BAA-916 / DSM 44818 / JCM 13857 / NBRC 105044 / CNB-440).